The following is a 209-amino-acid chain: Ribosomal RNA large subunit methyltransferase E (209 aa).

Positions 63, 65, 83, 99, and 124 each coordinate S-adenosyl-L-methionine. Lys164 functions as the Proton acceptor in the catalytic mechanism.

It belongs to the class I-like SAM-binding methyltransferase superfamily. RNA methyltransferase RlmE family.

Its subcellular location is the cytoplasm. The catalysed reaction is uridine(2552) in 23S rRNA + S-adenosyl-L-methionine = 2'-O-methyluridine(2552) in 23S rRNA + S-adenosyl-L-homocysteine + H(+). Functionally, specifically methylates the uridine in position 2552 of 23S rRNA at the 2'-O position of the ribose in the fully assembled 50S ribosomal subunit. This chain is Ribosomal RNA large subunit methyltransferase E, found in Aliivibrio fischeri (strain ATCC 700601 / ES114) (Vibrio fischeri).